A 393-amino-acid polypeptide reads, in one-letter code: 4-hydroxyphenylpyruvate dioxygenase (393 aa).

Thr2 is modified (N-acetylthreonine). 2 VOC domains span residues 18-149 (HFHS…LVEK) and 180-338 (IIDH…IFTK). At Lys132 the chain carries N6-succinyllysine. His183 contacts Fe cation. Ser211, Ser226, and Ser250 each carry phosphoserine. Residues His266 and Glu349 each contribute to the Fe cation site.

Belongs to the 4HPPD family. Homodimer. Fe cation is required as a cofactor.

It localises to the cytoplasm. The protein localises to the endoplasmic reticulum membrane. The protein resides in the golgi apparatus membrane. The catalysed reaction is 3-(4-hydroxyphenyl)pyruvate + O2 = homogentisate + CO2. Its pathway is amino-acid degradation; L-phenylalanine degradation; acetoacetate and fumarate from L-phenylalanine: step 3/6. In terms of biological role, catalyzes the conversion of 4-hydroxyphenylpyruvic acid to homogentisic acid, one of the steps in tyrosine catabolism. This is 4-hydroxyphenylpyruvate dioxygenase (HPD) from Bos taurus (Bovine).